The sequence spans 170 residues: Bacilliredoxin SRU_1493 (170 aa).

The disordered stretch occupies residues 140–170; it reads CGDEEPPADAPSRPDPSSSGEGLPSTFQSIT.

This sequence belongs to the bacilliredoxin family.

The chain is Bacilliredoxin SRU_1493 from Salinibacter ruber (strain DSM 13855 / M31).